Here is a 256-residue protein sequence, read N- to C-terminus: Tryptophan synthase alpha chain (256 aa).

Active-site proton acceptor residues include glutamate 45 and aspartate 56.

It belongs to the TrpA family. In terms of assembly, tetramer of two alpha and two beta chains.

The enzyme catalyses (1S,2R)-1-C-(indol-3-yl)glycerol 3-phosphate + L-serine = D-glyceraldehyde 3-phosphate + L-tryptophan + H2O. Its pathway is amino-acid biosynthesis; L-tryptophan biosynthesis; L-tryptophan from chorismate: step 5/5. Functionally, the alpha subunit is responsible for the aldol cleavage of indoleglycerol phosphate to indole and glyceraldehyde 3-phosphate. This chain is Tryptophan synthase alpha chain, found in Christiangramia forsetii (strain DSM 17595 / CGMCC 1.15422 / KT0803) (Gramella forsetii).